A 114-amino-acid polypeptide reads, in one-letter code: U17-barytoxin-Tl1a (114 aa).

Residues 1 to 20 (MKTIIVFLSLLVLATKFGDA) form the signal peptide. Positions 21-74 (NEGVNQEQMKEVIQNEFREDFLNEMAAMSLLQQLEAIESTLLEKEADRNSRQKR) are excised as a propeptide. 3 disulfides stabilise this stretch: cysteine 75-cysteine 88, cysteine 82-cysteine 93, and cysteine 87-cysteine 108.

It belongs to the neurotoxin 14 (magi-1) family. 03 (ICK-30-40) subfamily. In terms of tissue distribution, expressed by the venom gland.

Its subcellular location is the secreted. Ion channel inhibitor. This is U17-barytoxin-Tl1a from Trittame loki (Brush-footed trapdoor spider).